A 347-amino-acid polypeptide reads, in one-letter code: DNA-directed RNA polymerase subunit alpha (347 aa).

The segment at 1–243 is alpha N-terminal domain (alpha-NTD); the sequence is MLIKQGDRLI…DQISVFINFD (243 aa). The segment at 260–347 is alpha C-terminal domain (alpha-CTD); that stretch reads FNEHLFKSID…EWKRKQQHEA (88 aa).

It belongs to the RNA polymerase alpha chain family. Homodimer. The RNAP catalytic core consists of 2 alpha, 1 beta, 1 beta' and 1 omega subunit. When a sigma factor is associated with the core the holoenzyme is formed, which can initiate transcription.

The catalysed reaction is RNA(n) + a ribonucleoside 5'-triphosphate = RNA(n+1) + diphosphate. In terms of biological role, DNA-dependent RNA polymerase catalyzes the transcription of DNA into RNA using the four ribonucleoside triphosphates as substrates. The chain is DNA-directed RNA polymerase subunit alpha from Nitratidesulfovibrio vulgaris (strain ATCC 29579 / DSM 644 / CCUG 34227 / NCIMB 8303 / VKM B-1760 / Hildenborough) (Desulfovibrio vulgaris).